The sequence spans 72 residues: DNA gyrase inhibitor YacG (72 aa).

Positions 7, 10, 26, and 30 each coordinate Zn(2+). A disordered region spans residues 44–72 (SIAGEEHTPSSDTARPQLSAEDLALLEQD).

Belongs to the DNA gyrase inhibitor YacG family. Interacts with GyrB. It depends on Zn(2+) as a cofactor.

Inhibits all the catalytic activities of DNA gyrase by preventing its interaction with DNA. Acts by binding directly to the C-terminal domain of GyrB, which probably disrupts DNA binding by the gyrase. The protein is DNA gyrase inhibitor YacG of Tolumonas auensis (strain DSM 9187 / NBRC 110442 / TA 4).